The sequence spans 155 residues: SsrA-binding protein (155 aa).

It belongs to the SmpB family.

It is found in the cytoplasm. Required for rescue of stalled ribosomes mediated by trans-translation. Binds to transfer-messenger RNA (tmRNA), required for stable association of tmRNA with ribosomes. tmRNA and SmpB together mimic tRNA shape, replacing the anticodon stem-loop with SmpB. tmRNA is encoded by the ssrA gene; the 2 termini fold to resemble tRNA(Ala) and it encodes a 'tag peptide', a short internal open reading frame. During trans-translation Ala-aminoacylated tmRNA acts like a tRNA, entering the A-site of stalled ribosomes, displacing the stalled mRNA. The ribosome then switches to translate the ORF on the tmRNA; the nascent peptide is terminated with the 'tag peptide' encoded by the tmRNA and targeted for degradation. The ribosome is freed to recommence translation, which seems to be the essential function of trans-translation. This Streptococcus pyogenes serotype M4 (strain MGAS10750) protein is SsrA-binding protein.